Consider the following 296-residue polypeptide: Phosphatidylserine decarboxylase proenzyme (296 aa).

Active-site charge relay system; for autoendoproteolytic cleavage activity residues include Asp-100, His-157, and Ser-263. Catalysis depends on Ser-263, which acts as the Schiff-base intermediate with substrate; via pyruvic acid; for decarboxylase activity. Residue Ser-263 is modified to Pyruvic acid (Ser); by autocatalysis.

Belongs to the phosphatidylserine decarboxylase family. PSD-B subfamily. Prokaryotic type I sub-subfamily. In terms of assembly, heterodimer of a large membrane-associated beta subunit and a small pyruvoyl-containing alpha subunit. Pyruvate is required as a cofactor. Post-translationally, is synthesized initially as an inactive proenzyme. Formation of the active enzyme involves a self-maturation process in which the active site pyruvoyl group is generated from an internal serine residue via an autocatalytic post-translational modification. Two non-identical subunits are generated from the proenzyme in this reaction, and the pyruvate is formed at the N-terminus of the alpha chain, which is derived from the carboxyl end of the proenzyme. The autoendoproteolytic cleavage occurs by a canonical serine protease mechanism, in which the side chain hydroxyl group of the serine supplies its oxygen atom to form the C-terminus of the beta chain, while the remainder of the serine residue undergoes an oxidative deamination to produce ammonia and the pyruvoyl prosthetic group on the alpha chain. During this reaction, the Ser that is part of the protease active site of the proenzyme becomes the pyruvoyl prosthetic group, which constitutes an essential element of the active site of the mature decarboxylase.

Its subcellular location is the cell membrane. It carries out the reaction a 1,2-diacyl-sn-glycero-3-phospho-L-serine + H(+) = a 1,2-diacyl-sn-glycero-3-phosphoethanolamine + CO2. It participates in phospholipid metabolism; phosphatidylethanolamine biosynthesis; phosphatidylethanolamine from CDP-diacylglycerol: step 2/2. In terms of biological role, catalyzes the formation of phosphatidylethanolamine (PtdEtn) from phosphatidylserine (PtdSer). This Actinobacillus pleuropneumoniae serotype 7 (strain AP76) protein is Phosphatidylserine decarboxylase proenzyme.